Consider the following 217-residue polypeptide: Probable rhamnogalacturonan acetylesterase YesY (217 aa).

The Nucleophile role is filled by S11. Catalysis depends on residues E178 and H185.

Belongs to the 'GDSL' lipolytic enzyme family.

May play a role in the degradation of rhamnogalacturonan derived from plant cell walls. Probably has broad substrate specificity and may degrade several types of acetylated substrates. The protein is Probable rhamnogalacturonan acetylesterase YesY (yesY) of Bacillus subtilis (strain 168).